The sequence spans 370 residues: Flagellar P-ring protein (370 aa).

The first 28 residues, 1 to 28 (MTFFTRCFRRGALLFLLAVLLLPSPAQA), serve as a signal peptide directing secretion.

Belongs to the FlgI family. In terms of assembly, the basal body constitutes a major portion of the flagellar organelle and consists of four rings (L,P,S, and M) mounted on a central rod.

The protein resides in the periplasm. It localises to the bacterial flagellum basal body. Assembles around the rod to form the L-ring and probably protects the motor/basal body from shearing forces during rotation. The protein is Flagellar P-ring protein of Oleidesulfovibrio alaskensis (strain ATCC BAA-1058 / DSM 17464 / G20) (Desulfovibrio alaskensis).